The following is a 506-amino-acid chain: MNTLTLTPGHLSFAQLRAVWQQPVQLRLDSSAVDGINASVDCVNNIVAEGRTAYGINTGFGLLAQTRIATEDLQNLQRSLVLSHAAGIGEPLDDAMVRLIMVLKINSLARGFSGIRLSVIEALIALVNAEVWPLIPAKGSVGASGDLAPLAHMSLTLLGEGKARWQGEWLPAKEALKKAGLEPITLAAKEGLALLNGTQASTAFALRGLFEAQALFASAVVCGALTTEAVLGSRRPFDARIHAARGQRGQIDAAGLFRHVLTETSAIAQSHHNCEKVQDPYSLRCQPQVMGACLTQLRQAMEVLLVEANAVSDNPLVFAEEGDVISGGNFHAEPVAMAADNLALAIAEIGALSERRIALMMDKHMSQLPPFLVKNGGVNSGFMIAQVTAAALASENKALAHPHSVDSLPTSANQEDHVSMAPAAGRRLWEMAANTRGVIAVEWLAACQGIDLREGLTSSPLLEQARKALREQVPHYTQDRFFAPDIECATELLARGDLFRLLPDFL.

Positions 143–145 form a cross-link, 5-imidazolinone (Ala-Gly); that stretch reads ASG. At Ser-144 the chain carries 2,3-didehydroalanine (Ser).

It belongs to the PAL/histidase family. Post-translationally, contains an active site 4-methylidene-imidazol-5-one (MIO), which is formed autocatalytically by cyclization and dehydration of residues Ala-Ser-Gly.

Its subcellular location is the cytoplasm. The enzyme catalyses L-histidine = trans-urocanate + NH4(+). The protein operates within amino-acid degradation; L-histidine degradation into L-glutamate; N-formimidoyl-L-glutamate from L-histidine: step 1/3. The polypeptide is Histidine ammonia-lyase (Citrobacter koseri (strain ATCC BAA-895 / CDC 4225-83 / SGSC4696)).